Reading from the N-terminus, the 242-residue chain is Small ribosomal subunit protein uS2 (242 aa).

The protein belongs to the universal ribosomal protein uS2 family.

This is Small ribosomal subunit protein uS2 from Aeromonas hydrophila subsp. hydrophila (strain ATCC 7966 / DSM 30187 / BCRC 13018 / CCUG 14551 / JCM 1027 / KCTC 2358 / NCIMB 9240 / NCTC 8049).